The following is a 184-amino-acid chain: Photosystem I assembly protein Ycf4 (184 aa).

A run of 2 helical transmembrane segments spans residues 19–39 and 57–77; these read ISNF…LLVG and IIFF…LFIS.

It belongs to the Ycf4 family.

It is found in the plastid. It localises to the chloroplast thylakoid membrane. Functionally, seems to be required for the assembly of the photosystem I complex. This chain is Photosystem I assembly protein Ycf4, found in Solanum bulbocastanum (Wild potato).